A 156-amino-acid polypeptide reads, in one-letter code: Small ribosomal subunit protein uS7 (156 aa).

Belongs to the universal ribosomal protein uS7 family. Part of the 30S ribosomal subunit. Contacts proteins S9 and S11.

One of the primary rRNA binding proteins, it binds directly to 16S rRNA where it nucleates assembly of the head domain of the 30S subunit. Is located at the subunit interface close to the decoding center, probably blocks exit of the E-site tRNA. The chain is Small ribosomal subunit protein uS7 from Pseudomonas syringae pv. syringae (strain B728a).